A 473-amino-acid chain; its full sequence is 3-isopropylmalate dehydratase large subunit (473 aa).

[4Fe-4S] cluster is bound by residues Cys-354, Cys-414, and Cys-417.

This sequence belongs to the aconitase/IPM isomerase family. LeuC type 1 subfamily. In terms of assembly, heterodimer of LeuC and LeuD. [4Fe-4S] cluster serves as cofactor.

It catalyses the reaction (2R,3S)-3-isopropylmalate = (2S)-2-isopropylmalate. The protein operates within amino-acid biosynthesis; L-leucine biosynthesis; L-leucine from 3-methyl-2-oxobutanoate: step 2/4. Its function is as follows. Catalyzes the isomerization between 2-isopropylmalate and 3-isopropylmalate, via the formation of 2-isopropylmaleate. This chain is 3-isopropylmalate dehydratase large subunit, found in Mycobacterium tuberculosis (strain CDC 1551 / Oshkosh).